The sequence spans 386 residues: Zinc finger CCCH domain-containing protein 39 (386 aa).

The disordered stretch occupies residues 1–90; sequence MDSSYSDSRP…SSSNPWMVPS (90 aa). The span at 20–37 shows a compositional bias: polar residues; sequence WNQTQMIDSMANPMNNEQ. Over residues 43–58 the composition is skewed to low complexity; that stretch reads LSESQSQSQPSQQLQP. Positions 72–85 are enriched in polar residues; sequence NPASSFPQPSSSNP. The C3H1-type 1 zinc-finger motif lies at 104–131; it reads FYKTRMCAKFRAGTCRNGELCNFAHGIE. The segment at 136-166 is disordered; it reads PPSNWQEIVGPPPAGQDRERERERERERERP. The span at 151–166 shows a compositional bias: basic and acidic residues; it reads QDRERERERERERERP. 2 consecutive C3H1-type zinc fingers follow at residues 183–211 and 269–297; these read ILRM…HEDL and YWKT…HGQA.

This chain is Zinc finger CCCH domain-containing protein 39, found in Arabidopsis thaliana (Mouse-ear cress).